Reading from the N-terminus, the 293-residue chain is Probable endonuclease 4 (293 aa).

The Zn(2+) site is built by H77, H118, E153, D187, H190, H221, D234, H236, and E266.

This sequence belongs to the AP endonuclease 2 family. Requires Zn(2+) as cofactor.

It carries out the reaction Endonucleolytic cleavage to 5'-phosphooligonucleotide end-products.. Functionally, endonuclease IV plays a role in DNA repair. It cleaves phosphodiester bonds at apurinic or apyrimidinic (AP) sites, generating a 3'-hydroxyl group and a 5'-terminal sugar phosphate. The protein is Probable endonuclease 4 of Mesoplasma florum (strain ATCC 33453 / NBRC 100688 / NCTC 11704 / L1) (Acholeplasma florum).